Consider the following 185-residue polypeptide: Potassium-transporting ATPase KdpC subunit (185 aa).

A helical membrane pass occupies residues 14 to 34 (ALSLLTGVAYPLALTGIAAVI).

Belongs to the KdpC family. The system is composed of three essential subunits: KdpA, KdpB and KdpC.

It localises to the cell inner membrane. Its function is as follows. Part of the high-affinity ATP-driven potassium transport (or Kdp) system, which catalyzes the hydrolysis of ATP coupled with the electrogenic transport of potassium into the cytoplasm. This subunit acts as a catalytic chaperone that increases the ATP-binding affinity of the ATP-hydrolyzing subunit KdpB by the formation of a transient KdpB/KdpC/ATP ternary complex. This chain is Potassium-transporting ATPase KdpC subunit, found in Cereibacter sphaeroides (strain KD131 / KCTC 12085) (Rhodobacter sphaeroides).